The sequence spans 201 residues: MYDYIKGTVTTITPEYIVVEAGQIGYQIITGNPFSFQRLEGTEAQVFLYQHVREDNISLFGFQTTEERYLFKKLLSVSGIGPKSALAIIASGDVVPLISAIESEDDVYLTKFPSVGKKTARQIILDLKGKLADVVASEIVYVAPENDMVAGLSPQLEEAVLALEALGYSTRELKKVIPKLAKEEDLTSDAYIKLALQLMTK.

The domain I stretch occupies residues 1 to 63 (MYDYIKGTVT…EDNISLFGFQ (63 aa)). The segment at 64–142 (TTEERYLFKK…DVVASEIVYV (79 aa)) is domain II. A flexible linker region spans residues 143–153 (APENDMVAGLS). The domain III stretch occupies residues 153–201 (SPQLEEAVLALEALGYSTRELKKVIPKLAKEEDLTSDAYIKLALQLMTK).

This sequence belongs to the RuvA family. In terms of assembly, homotetramer. Forms an RuvA(8)-RuvB(12)-Holliday junction (HJ) complex. HJ DNA is sandwiched between 2 RuvA tetramers; dsDNA enters through RuvA and exits via RuvB. An RuvB hexamer assembles on each DNA strand where it exits the tetramer. Each RuvB hexamer is contacted by two RuvA subunits (via domain III) on 2 adjacent RuvB subunits; this complex drives branch migration. In the full resolvosome a probable DNA-RuvA(4)-RuvB(12)-RuvC(2) complex forms which resolves the HJ.

The protein localises to the cytoplasm. In terms of biological role, the RuvA-RuvB-RuvC complex processes Holliday junction (HJ) DNA during genetic recombination and DNA repair, while the RuvA-RuvB complex plays an important role in the rescue of blocked DNA replication forks via replication fork reversal (RFR). RuvA specifically binds to HJ cruciform DNA, conferring on it an open structure. The RuvB hexamer acts as an ATP-dependent pump, pulling dsDNA into and through the RuvAB complex. HJ branch migration allows RuvC to scan DNA until it finds its consensus sequence, where it cleaves and resolves the cruciform DNA. The polypeptide is Holliday junction branch migration complex subunit RuvA (Listeria monocytogenes serotype 4a (strain HCC23)).